The chain runs to 119 residues: Hydrogenase maturation factor HypA (119 aa).

Ni(2+) is bound at residue H2. Zn(2+)-binding residues include C73, C76, C89, and C92.

The protein belongs to the HypA/HybF family.

Its function is as follows. Involved in the maturation of [NiFe] hydrogenases. Required for nickel insertion into the metal center of the hydrogenase. This Dehalococcoides mccartyi (strain CBDB1) protein is Hydrogenase maturation factor HypA.